A 211-amino-acid polypeptide reads, in one-letter code: Protein-L-isoaspartate O-methyltransferase (211 aa).

S62 is a catalytic residue.

Belongs to the methyltransferase superfamily. L-isoaspartyl/D-aspartyl protein methyltransferase family.

The protein localises to the cytoplasm. It carries out the reaction [protein]-L-isoaspartate + S-adenosyl-L-methionine = [protein]-L-isoaspartate alpha-methyl ester + S-adenosyl-L-homocysteine. Functionally, catalyzes the methyl esterification of L-isoaspartyl residues in peptides and proteins that result from spontaneous decomposition of normal L-aspartyl and L-asparaginyl residues. It plays a role in the repair and/or degradation of damaged proteins. The polypeptide is Protein-L-isoaspartate O-methyltransferase (Shewanella loihica (strain ATCC BAA-1088 / PV-4)).